The following is a 384-amino-acid chain: MSWQEKINAALDARRAADALRRRYPVAQGAGRWLVADDRQYLNFSSNDYLGLSHHPQIIRAWKQGAEQFGVGSGGSGHVSGYSVAHQALEEELAEWLGYSRALLFISGFAANQAVIAAMMAKEDRIVADRLSHASLLEAASLSPSQLRRFVHNDVTHLARLLASPCPGQQLVVTEGVFSMDGDSAPLGEIQQVTQQHNGWLMVDDAHGTGVIGEQGRGSCWLQKVKPELLVVTFGKGFGVSGAAVLCSSTVADYLLQFARHLIYSTSMPPAQAQALRASLAVIRSDEGDARREKLAALITRFRAGVQDLPFTLADSCSAIQPLIVGDNSRALQLAEKLRQQGCWVTAIRPPTVPAGTARLRLTLTAAHEMQDIDRLLEVLHGNG.

R21 is a binding site for substrate. Position 108-109 (108-109) interacts with pyridoxal 5'-phosphate; it reads GF. H133 lines the substrate pocket. Pyridoxal 5'-phosphate contacts are provided by S179, H207, and T233. K236 carries the N6-(pyridoxal phosphate)lysine modification. Substrate is bound at residue T352.

The protein belongs to the class-II pyridoxal-phosphate-dependent aminotransferase family. BioF subfamily. Homodimer. The cofactor is pyridoxal 5'-phosphate.

It carries out the reaction 6-carboxyhexanoyl-[ACP] + L-alanine + H(+) = (8S)-8-amino-7-oxononanoate + holo-[ACP] + CO2. Its pathway is cofactor biosynthesis; biotin biosynthesis. Functionally, catalyzes the decarboxylative condensation of pimeloyl-[acyl-carrier protein] and L-alanine to produce 8-amino-7-oxononanoate (AON), [acyl-carrier protein], and carbon dioxide. This Shigella dysenteriae serotype 1 (strain Sd197) protein is 8-amino-7-oxononanoate synthase.